A 613-amino-acid polypeptide reads, in one-letter code: Methionine--tRNA ligase (613 aa).

A 'HIGH' region motif is present at residues 15–25 (PYANGPRHIGH). Zn(2+) contacts are provided by cysteine 147, cysteine 150, cysteine 160, and cysteine 163. The 'KMSKS' region signature appears at 351–355 (KFSSS). Serine 354 is a binding site for ATP.

Belongs to the class-I aminoacyl-tRNA synthetase family. MetG type 1 subfamily. In terms of assembly, monomer. It depends on Zn(2+) as a cofactor.

It is found in the cytoplasm. It carries out the reaction tRNA(Met) + L-methionine + ATP = L-methionyl-tRNA(Met) + AMP + diphosphate. In terms of biological role, is required not only for elongation of protein synthesis but also for the initiation of all mRNA translation through initiator tRNA(fMet) aminoacylation. In Corynebacterium efficiens (strain DSM 44549 / YS-314 / AJ 12310 / JCM 11189 / NBRC 100395), this protein is Methionine--tRNA ligase.